The chain runs to 244 residues: INO80 complex subunit E (244 aa).

Residues 10 to 54 (DYKKKYRNLKRKLKFLIYEHECFQEELRKAQRKLLKVSRDKSFLL) adopt a coiled-coil conformation. The interval 63–236 (VDEDSSDSDA…SGDDALDGDD (174 aa)) is disordered. Positions 99–115 (PPLGGAPSPSSLSLPPS) are enriched in low complexity. Residues 157–171 (RPKREKRPRLPRKLK) are compositionally biased toward basic residues. Residues Lys-159 and Lys-171 each participate in a glycyl lysine isopeptide (Lys-Gly) (interchain with G-Cter in SUMO2) cross-link. A compositionally biased stretch (pro residues) spans 202–212 (PLPPPKMPPPT).

As to quaternary structure, component of the chromatin remodeling INO80 complex; specifically part of a complex module associated with the N-terminus of INO80.

The protein resides in the nucleus. Putative regulatory component of the chromatin remodeling INO80 complex which is involved in transcriptional regulation, DNA replication and probably DNA repair. The chain is INO80 complex subunit E (INO80E) from Homo sapiens (Human).